We begin with the raw amino-acid sequence, 304 residues long: N-acetylmuramic acid 6-phosphate etherase (304 aa).

Residues 62–225 form the SIS domain; the sequence is IVQAFQNGGR…TTASMVMIGK (164 aa). The active-site Proton donor is Glu-90. Glu-121 is an active-site residue.

The protein belongs to the GCKR-like family. MurNAc-6-P etherase subfamily. In terms of assembly, homodimer.

The enzyme catalyses N-acetyl-D-muramate 6-phosphate + H2O = N-acetyl-D-glucosamine 6-phosphate + (R)-lactate. It functions in the pathway amino-sugar metabolism; 1,6-anhydro-N-acetylmuramate degradation. Its pathway is amino-sugar metabolism; N-acetylmuramate degradation. It participates in cell wall biogenesis; peptidoglycan recycling. Functionally, specifically catalyzes the cleavage of the D-lactyl ether substituent of MurNAc 6-phosphate, producing GlcNAc 6-phosphate and D-lactate. Together with AnmK, is also required for the utilization of anhydro-N-acetylmuramic acid (anhMurNAc) either imported from the medium or derived from its own cell wall murein, and thus plays a role in cell wall recycling. This is N-acetylmuramic acid 6-phosphate etherase from Actinobacillus pleuropneumoniae serotype 7 (strain AP76).